Reading from the N-terminus, the 311-residue chain is Porphobilinogen deaminase (311 aa).

Cys-242 bears the S-(dipyrrolylmethanemethyl)cysteine mark.

Belongs to the HMBS family. As to quaternary structure, monomer. Dipyrromethane serves as cofactor.

The catalysed reaction is 4 porphobilinogen + H2O = hydroxymethylbilane + 4 NH4(+). It participates in porphyrin-containing compound metabolism; protoporphyrin-IX biosynthesis; coproporphyrinogen-III from 5-aminolevulinate: step 2/4. In terms of biological role, tetrapolymerization of the monopyrrole PBG into the hydroxymethylbilane pre-uroporphyrinogen in several discrete steps. In Baumannia cicadellinicola subsp. Homalodisca coagulata, this protein is Porphobilinogen deaminase.